Consider the following 319-residue polypeptide: Acetyl-coenzyme A carboxylase carboxyl transferase subunit alpha (319 aa).

A CoA carboxyltransferase C-terminal domain is found at 35 to 296 (DLEKEIKQLE…KQRLLEQLKE (262 aa)).

The protein belongs to the AccA family. Acetyl-CoA carboxylase is a heterohexamer composed of biotin carboxyl carrier protein (AccB), biotin carboxylase (AccC) and two subunits each of ACCase subunit alpha (AccA) and ACCase subunit beta (AccD).

It is found in the cytoplasm. The catalysed reaction is N(6)-carboxybiotinyl-L-lysyl-[protein] + acetyl-CoA = N(6)-biotinyl-L-lysyl-[protein] + malonyl-CoA. It participates in lipid metabolism; malonyl-CoA biosynthesis; malonyl-CoA from acetyl-CoA: step 1/1. Functionally, component of the acetyl coenzyme A carboxylase (ACC) complex. First, biotin carboxylase catalyzes the carboxylation of biotin on its carrier protein (BCCP) and then the CO(2) group is transferred by the carboxyltransferase to acetyl-CoA to form malonyl-CoA. This Aliivibrio fischeri (strain MJ11) (Vibrio fischeri) protein is Acetyl-coenzyme A carboxylase carboxyl transferase subunit alpha.